The sequence spans 395 residues: 1-deoxy-D-xylulose 5-phosphate reductoisomerase (395 aa).

The NADPH site is built by threonine 10, glycine 11, serine 12, isoleucine 13, and asparagine 123. Position 124 (lysine 124) interacts with 1-deoxy-D-xylulose 5-phosphate. Glutamate 125 contacts NADPH. Aspartate 149 contacts Mn(2+). Residues serine 150, glutamate 151, serine 185, and histidine 208 each contribute to the 1-deoxy-D-xylulose 5-phosphate site. Position 151 (glutamate 151) interacts with Mn(2+). NADPH is bound at residue glycine 214. Positions 221, 226, 227, and 230 each coordinate 1-deoxy-D-xylulose 5-phosphate. Residue glutamate 230 coordinates Mn(2+).

This sequence belongs to the DXR family. The cofactor is Mg(2+). Requires Mn(2+) as cofactor.

The enzyme catalyses 2-C-methyl-D-erythritol 4-phosphate + NADP(+) = 1-deoxy-D-xylulose 5-phosphate + NADPH + H(+). Its pathway is isoprenoid biosynthesis; isopentenyl diphosphate biosynthesis via DXP pathway; isopentenyl diphosphate from 1-deoxy-D-xylulose 5-phosphate: step 1/6. Its function is as follows. Catalyzes the NADPH-dependent rearrangement and reduction of 1-deoxy-D-xylulose-5-phosphate (DXP) to 2-C-methyl-D-erythritol 4-phosphate (MEP). The polypeptide is 1-deoxy-D-xylulose 5-phosphate reductoisomerase (Shewanella sediminis (strain HAW-EB3)).